The primary structure comprises 1131 residues: DNA polymerase II large subunit (1131 aa).

It belongs to the archaeal DNA polymerase II family. In terms of assembly, heterodimer of a large subunit and a small subunit.

It catalyses the reaction DNA(n) + a 2'-deoxyribonucleoside 5'-triphosphate = DNA(n+1) + diphosphate. The catalysed reaction is Exonucleolytic cleavage in the 3'- to 5'-direction to yield nucleoside 5'-phosphates.. Functionally, possesses two activities: a DNA synthesis (polymerase) and an exonucleolytic activity that degrades single-stranded DNA in the 3'- to 5'-direction. Has a template-primer preference which is characteristic of a replicative DNA polymerase. This is DNA polymerase II large subunit from Methanococcus vannielii (strain ATCC 35089 / DSM 1224 / JCM 13029 / OCM 148 / SB).